We begin with the raw amino-acid sequence, 498 residues long: ATP synthase subunit beta, chloroplastic (498 aa).

ATP is bound at residue 172 to 179 (GGAGVGKT).

Belongs to the ATPase alpha/beta chains family. F-type ATPases have 2 components, CF(1) - the catalytic core - and CF(0) - the membrane proton channel. CF(1) has five subunits: alpha(3), beta(3), gamma(1), delta(1), epsilon(1). CF(0) has four main subunits: a(1), b(1), b'(1) and c(9-12).

The protein localises to the plastid. Its subcellular location is the chloroplast thylakoid membrane. It catalyses the reaction ATP + H2O + 4 H(+)(in) = ADP + phosphate + 5 H(+)(out). In terms of biological role, produces ATP from ADP in the presence of a proton gradient across the membrane. The catalytic sites are hosted primarily by the beta subunits. The protein is ATP synthase subunit beta, chloroplastic of Phormium tenax (New Zealand flax).